Consider the following 209-residue polypeptide: Ribosomal RNA large subunit methyltransferase E (209 aa).

Glycine 63, tryptophan 65, aspartate 83, aspartate 99, and aspartate 124 together coordinate S-adenosyl-L-methionine. The active-site Proton acceptor is the lysine 164.

It belongs to the class I-like SAM-binding methyltransferase superfamily. RNA methyltransferase RlmE family.

It is found in the cytoplasm. The enzyme catalyses uridine(2552) in 23S rRNA + S-adenosyl-L-methionine = 2'-O-methyluridine(2552) in 23S rRNA + S-adenosyl-L-homocysteine + H(+). Specifically methylates the uridine in position 2552 of 23S rRNA at the 2'-O position of the ribose in the fully assembled 50S ribosomal subunit. This chain is Ribosomal RNA large subunit methyltransferase E, found in Tolumonas auensis (strain DSM 9187 / NBRC 110442 / TA 4).